The chain runs to 360 residues: DNA replication and repair protein RecF (360 aa).

Residue 30–37 (GHNGSGKT) participates in ATP binding.

Belongs to the RecF family.

The protein localises to the cytoplasm. Its function is as follows. The RecF protein is involved in DNA metabolism; it is required for DNA replication and normal SOS inducibility. RecF binds preferentially to single-stranded, linear DNA. It also seems to bind ATP. The polypeptide is DNA replication and repair protein RecF (Shewanella pealeana (strain ATCC 700345 / ANG-SQ1)).